We begin with the raw amino-acid sequence, 630 residues long: Lysophospholipase 3 (630 aa).

Residues 1-16 (MKALLSLLTAVAVATA) form the signal peptide. Residues 39-587 (SCPATRPSIR…KEYCWNGTVD (549 aa)) form the PLA2c domain. N-linked (GlcNAc...) asparagine glycans are attached at residues Asn-56, Asn-95, Asn-164, Asn-220, Asn-283, Asn-351, Asn-390, Asn-443, Asn-456, Asn-462, Asn-493, Asn-514, Asn-542, Asn-566, and Asn-583. Residue Asn-606 is the site of GPI-like-anchor amidated asparagine attachment. The propeptide at 607-630 (AAYTQGVTWLVGILAVGVAMGMTA) is removed in mature form.

Belongs to the lysophospholipase family. Post-translationally, the GPI-like anchor contains a phosphoceramide lipid group.

The protein localises to the cell membrane. The enzyme catalyses a 1-acyl-sn-glycero-3-phosphocholine + H2O = sn-glycerol 3-phosphocholine + a fatty acid + H(+). In terms of biological role, catalyzes the release of fatty acids from lysophospholipids. This is Lysophospholipase 3 (plb3) from Aspergillus fumigatus (strain CBS 144.89 / FGSC A1163 / CEA10) (Neosartorya fumigata).